An 84-amino-acid chain; its full sequence is Cell division topological specificity factor (84 aa).

It belongs to the MinE family.

Prevents the cell division inhibition by proteins MinC and MinD at internal division sites while permitting inhibition at polar sites. This ensures cell division at the proper site by restricting the formation of a division septum at the midpoint of the long axis of the cell. The chain is Cell division topological specificity factor from Hydrogenovibrio crunogenus (strain DSM 25203 / XCL-2) (Thiomicrospira crunogena).